The chain runs to 802 residues: Lon protease (802 aa).

The Lon N-terminal domain maps to 17 to 209 (LPILPLNNVV…QVLSFLERER (193 aa)). 363–370 (GPPGVGKT) is a binding site for ATP. The 182-residue stretch at 599–780 (EDEVGVVTGL…DEVLPRVLHP (182 aa)) folds into the Lon proteolytic domain. Active-site residues include Ser686 and Lys729.

This sequence belongs to the peptidase S16 family. Homohexamer. Organized in a ring with a central cavity.

It localises to the cytoplasm. The enzyme catalyses Hydrolysis of proteins in presence of ATP.. In terms of biological role, ATP-dependent serine protease that mediates the selective degradation of mutant and abnormal proteins as well as certain short-lived regulatory proteins. Required for cellular homeostasis and for survival from DNA damage and developmental changes induced by stress. Degrades polypeptides processively to yield small peptide fragments that are 5 to 10 amino acids long. Binds to DNA in a double-stranded, site-specific manner. This chain is Lon protease, found in Roseiflexus castenholzii (strain DSM 13941 / HLO8).